We begin with the raw amino-acid sequence, 158 residues long: Phosphopantetheine adenylyltransferase (158 aa).

Residue T10 participates in substrate binding. ATP is bound by residues 10 to 11 (TF) and H18. Positions 42, 74, and 88 each coordinate substrate. Residues 89 to 91 (GLR), E99, and 124 to 130 (YSFISSS) each bind ATP.

The protein belongs to the bacterial CoaD family. Homohexamer. Mg(2+) is required as a cofactor.

The protein resides in the cytoplasm. It catalyses the reaction (R)-4'-phosphopantetheine + ATP + H(+) = 3'-dephospho-CoA + diphosphate. It participates in cofactor biosynthesis; coenzyme A biosynthesis; CoA from (R)-pantothenate: step 4/5. Its function is as follows. Reversibly transfers an adenylyl group from ATP to 4'-phosphopantetheine, yielding dephospho-CoA (dPCoA) and pyrophosphate. This chain is Phosphopantetheine adenylyltransferase, found in Erwinia tasmaniensis (strain DSM 17950 / CFBP 7177 / CIP 109463 / NCPPB 4357 / Et1/99).